A 274-amino-acid polypeptide reads, in one-letter code: NADH-ubiquinone oxidoreductase chain 2 (274 aa).

A run of 8 helical transmembrane segments spans residues 28–48, 54–74, 79–99, 107–127, 128–148, 171–191, 206–226, and 254–274; these read MIIM…FWFP, LTWM…LMLI, IKYL…IGGL, LMAF…MISE, SIWL…TFMF, FTLF…GFLP, FLLL…LRIC, and LIMT…YFMF.

It belongs to the complex I subunit 2 family.

The protein resides in the mitochondrion inner membrane. It catalyses the reaction a ubiquinone + NADH + 5 H(+)(in) = a ubiquinol + NAD(+) + 4 H(+)(out). Core subunit of the mitochondrial membrane respiratory chain NADH dehydrogenase (Complex I) that is believed to belong to the minimal assembly required for catalysis. Complex I functions in the transfer of electrons from NADH to the respiratory chain. The immediate electron acceptor for the enzyme is believed to be ubiquinone. The polypeptide is NADH-ubiquinone oxidoreductase chain 2 (mt:ND2) (Drosophila mauritiana (Fruit fly)).